Here is a 729-residue protein sequence, read N- to C-terminus: Polyribonucleotide nucleotidyltransferase (729 aa).

Mg(2+) is bound by residues D485 and D491. One can recognise a KH domain in the interval 552–611 (PRITTMKVAEDKIRTIIGKGGATIKGLIESTGVSIDIDDSGVIQLFSPDKMALEEAQKQI). One can recognise an S1 motif domain in the interval 621–689 (GQTYQGKVSK…KQGRVKLEWK (69 aa)).

This sequence belongs to the polyribonucleotide nucleotidyltransferase family. In terms of assembly, component of the RNA degradosome, which is a multiprotein complex involved in RNA processing and mRNA degradation. Mg(2+) serves as cofactor.

Its subcellular location is the cytoplasm. It catalyses the reaction RNA(n+1) + phosphate = RNA(n) + a ribonucleoside 5'-diphosphate. Functionally, involved in mRNA degradation. Catalyzes the phosphorolysis of single-stranded polyribonucleotides processively in the 3'- to 5'-direction. The chain is Polyribonucleotide nucleotidyltransferase from Legionella pneumophila (strain Corby).